A 56-amino-acid chain; its full sequence is Calsequestrin-1 (56 aa).

Tyr-9 carries the phosphotyrosine modification. Ser-47 is subject to Phosphoserine.

Belongs to the calsequestrin family. In terms of assembly, monomer; increases in response to a depletion of intracellular calcium. Homodimer. Homotetramer and homopolymer. Can form linear homooligomers. Ca(2+) ions promote oligomerization. Interacts (via C-terminal end and preferentially with the monomeric form) with STIM1; this interaction increases in response to a depletion of intracellular calcium, decreases both STIM1 aggregation and clustering, interaction of STIM1 with ORAI1 and store-operated Ca(2+) entry (SOCE) activity. Interacts with ASPH and TRDN. In terms of processing, N-glycosylated.

It localises to the endoplasmic reticulum. Its subcellular location is the sarcoplasmic reticulum. The protein resides in the sarcoplasmic reticulum lumen. The protein localises to the sarcoplasmic reticulum membrane. It is found in the mitochondrion matrix. Its function is as follows. Calsequestrin is a high-capacity, moderate affinity, calcium-binding protein and thus acts as an internal calcium store in muscle. Calcium ions are bound by clusters of acidic residues at the protein surface, often at the interface between subunits. Can bind around 80 Ca(2+) ions. Regulates the release of lumenal Ca(2+) via the calcium release channel RYR1; this plays an important role in triggering muscle contraction. Negatively regulates store-operated Ca(2+) entry (SOCE) activity. The sequence is that of Calsequestrin-1 (CASQ1) from Canis lupus familiaris (Dog).